The primary structure comprises 161 residues: Nucleotide-binding protein Bcep18194_A5887 (161 aa).

This sequence belongs to the YajQ family.

Nucleotide-binding protein. This chain is Nucleotide-binding protein Bcep18194_A5887, found in Burkholderia lata (strain ATCC 17760 / DSM 23089 / LMG 22485 / NCIMB 9086 / R18194 / 383).